The sequence spans 490 residues: Ketol-acid reductoisomerase (NADP(+)) (490 aa).

Positions 15–208 (INLQKCKLID…GSHHAGILHS (194 aa)) constitute a KARI N-terminal Rossmann domain. NADP(+) is bound by residues 45-48 (CGSQ), Arg68, Ser78, and 108-110 (DKQ). His132 is a catalytic residue. Gly158 serves as a coordination point for NADP(+). 2 KARI C-terminal knotted domains span residues 209 to 344 (SFIA…KCNI) and 345 to 484 (YYKQ…MTSM). Positions 217, 221, 389, and 393 each coordinate Mg(2+). Ser414 is a substrate binding site.

It belongs to the ketol-acid reductoisomerase family. It depends on Mg(2+) as a cofactor.

The enzyme catalyses (2R)-2,3-dihydroxy-3-methylbutanoate + NADP(+) = (2S)-2-acetolactate + NADPH + H(+). It catalyses the reaction (2R,3R)-2,3-dihydroxy-3-methylpentanoate + NADP(+) = (S)-2-ethyl-2-hydroxy-3-oxobutanoate + NADPH + H(+). Its pathway is amino-acid biosynthesis; L-isoleucine biosynthesis; L-isoleucine from 2-oxobutanoate: step 2/4. The protein operates within amino-acid biosynthesis; L-valine biosynthesis; L-valine from pyruvate: step 2/4. Functionally, involved in the biosynthesis of branched-chain amino acids (BCAA). Catalyzes an alkyl-migration followed by a ketol-acid reduction of (S)-2-acetolactate (S2AL) to yield (R)-2,3-dihydroxy-isovalerate. In the isomerase reaction, S2AL is rearranged via a Mg-dependent methyl migration to produce 3-hydroxy-3-methyl-2-ketobutyrate (HMKB). In the reductase reaction, this 2-ketoacid undergoes a metal-dependent reduction by NADPH to yield (R)-2,3-dihydroxy-isovalerate. The chain is Ketol-acid reductoisomerase (NADP(+)) from Buchnera aphidicola subsp. Melaphis rhois.